Here is a 122-residue protein sequence, read N- to C-terminus: Large ribosomal subunit protein uL14c (122 aa).

Belongs to the universal ribosomal protein uL14 family. As to quaternary structure, part of the 50S ribosomal subunit.

The protein localises to the plastid. The protein resides in the chloroplast. Functionally, binds to 23S rRNA. This is Large ribosomal subunit protein uL14c (rpl14) from Bigelowiella natans (Pedinomonas minutissima).